The following is a 215-amino-acid chain: Elongation factor Ts (215 aa).

An involved in Mg(2+) ion dislocation from EF-Tu region spans residues 80-83 (TDFV).

Belongs to the EF-Ts family.

The protein localises to the cytoplasm. Associates with the EF-Tu.GDP complex and induces the exchange of GDP to GTP. It remains bound to the aminoacyl-tRNA.EF-Tu.GTP complex up to the GTP hydrolysis stage on the ribosome. The polypeptide is Elongation factor Ts (Alkaliphilus metalliredigens (strain QYMF)).